We begin with the raw amino-acid sequence, 142 residues long: Dromaiocalcin-2 (142 aa).

3 disulfides stabilise this stretch: cysteine 6–cysteine 17, cysteine 34–cysteine 138, and cysteine 113–cysteine 130. The C-type lectin domain maps to 13–139; the sequence is FDGRCYGFFP…CSDRKPFICA (127 aa). A phosphoserine mark is found at serine 62 and serine 68.

In terms of processing, a minor form with some unmodified Ser-68 and partial phosphorylation of Ser-66 may also occur.

The protein resides in the secreted. The protein localises to the extracellular space. Its subcellular location is the extracellular matrix. The protein is Dromaiocalcin-2 of Dromaius novaehollandiae (Emu).